The chain runs to 216 residues: uncharacterized protein (216 aa).

4 helical membrane passes run isoleucine 5–serine 27, phenylalanine 98–leucine 120, valine 125–asparagine 147, and glycine 185–glycine 207.

The protein localises to the cell membrane. This is an uncharacterized protein from Aquifex aeolicus (strain VF5).